A 501-amino-acid polypeptide reads, in one-letter code: Symplectin (501 aa).

In terms of domain architecture, CN hydrolase spans 20 to 287 (PKTDMETREE…SKLLVAEILP (268 aa)). The active-site Proton acceptor is the E60. The Proton donor role is filled by K163. Residue C196 is the Nucleophile of the active site. S-(coelenterazin-3a-yl)cysteine is present on C390.

It belongs to the carbon-nitrogen hydrolase superfamily. BTD/VNN family. As to expression, photogenic gland (at protein level).

Functionally, monovalent ion-dependent bioluminescence photoprotein. Displays an emission peak at 470 nm (blue light). Trace amounts of monovalent ion trigger the intramolecular oxidation of the chromophore, didehydrocoelenterazine, with the emission of light. This is Symplectin from Sthenoteuthis oualaniensis (Purpleback flying squid).